The following is a 614-amino-acid chain: Ankyrin repeat domain-containing protein 55 (614 aa).

The segment at 1–20 (MMRQATMDFSTPSVFDQQRG) is disordered. Residues 7 to 16 (MDFSTPSVFD) are compositionally biased toward polar residues. ANK repeat units lie at residues 26 to 55 (VDLT…SILE), 60 to 89 (EGCT…NINM), 93 to 125 (YGRT…IPDK), 126 to 157 (NGRL…EINH), 161 to 190 (EGMT…DPTL), 194 to 223 (DFKT…GPSI), 230 to 260 (SGKT…NLQA), 264 to 293 (DDRT…DSNL), and 297 to 326 (NEST…TEPT). 4 disordered regions span residues 319-339 (QESR…PQKK), 354-375 (KKEE…EEDT), 454-476 (TSHA…SRSE), and 564-614 (RNNL…SDEN). Basic and acidic residues predominate over residues 354 to 373 (KKEEQRAHQKDPSRDRYREE). Ser-475 bears the Phosphoserine mark.

This Homo sapiens (Human) protein is Ankyrin repeat domain-containing protein 55 (ANKRD55).